The following is a 32-amino-acid chain: U13-ctenitoxin-Pn1a (32 aa).

Disulfide bonds link C3–C17, C10–C21, and C16–C30.

Expressed by the venom gland.

It is found in the secreted. Functionally, acts as a neurotoxin. In Phoneutria nigriventer (Brazilian armed spider), this protein is U13-ctenitoxin-Pn1a.